A 144-amino-acid chain; its full sequence is Large ribosomal subunit protein uL15 (144 aa).

Positions methionine 1–glycine 52 are disordered.

It belongs to the universal ribosomal protein uL15 family. As to quaternary structure, part of the 50S ribosomal subunit.

Its function is as follows. Binds to the 23S rRNA. The sequence is that of Large ribosomal subunit protein uL15 from Actinobacillus pleuropneumoniae serotype 7 (strain AP76).